Reading from the N-terminus, the 448-residue chain is Trigger factor (448 aa).

The PPIase FKBP-type domain occupies 173–258; it reads SDRVTIDFVG…LKQIEWAHMP (86 aa).

Belongs to the FKBP-type PPIase family. Tig subfamily.

The protein localises to the cytoplasm. The catalysed reaction is [protein]-peptidylproline (omega=180) = [protein]-peptidylproline (omega=0). Involved in protein export. Acts as a chaperone by maintaining the newly synthesized protein in an open conformation. Functions as a peptidyl-prolyl cis-trans isomerase. In Herminiimonas arsenicoxydans, this protein is Trigger factor.